The sequence spans 1003 residues: MAHLQLSAVAGGGRPAAAGGGGDEMEDVRLLDSYDEEMGGGAAAAAAGEEEEAHVRVTGMTCSACTSAVEGAVSARRGVRRVAVSLLQNRAHVVFDPALLKVEDIIEAIEDAGFDAEIIPDTAISQPKAQKTLSAQFRIGGMTCANCVNSVEGILKRLSGVKGAVVALATSLGEVEYDPSVINKDEIVEAIEDAGFEAAFLQSSEQDKILLGLTGLHTERDVNVLHDILKKMIGLRQFDVNATVSEVEIIFDPEAVGLRSIVDAIETGSNGRLKAHVQNPYARGASNDAHEAAKMLHLLRSSLFLSIPVFFIRMVCPHIPFIRSILMMHCGPFHMGDLLKWILVSIVQFVVGKRFYIAAYRALRHGSTNMDVLVVLGTTASYVYSVCALLYGAFTGFHPPIYFETSAMIITFVLFGKYLEVLAKGKTSDAIKKLVELVPATALLLLKDKEGKYTEEREIDALLVQPGDILKVLPGSKVPADGVVVWGTSHVNESMITGESAPIPKEVSSAVIGGTMNLHGVLHIQANKVGSETVLSQIISLVETAQMSKAPIQKFADYVASIFVPIVITLSMITFLVWFLCGWVGAYPNSWISGTSNCFVFSLMFAIAVVVIACPCALGLATPTAVMVATGVGANHGVLVKGGDALERAQNVNYVIFDKTGTLTQGKAVVTTAKVFSGMDLGDFLTLVASAEASSEHPLAKAIVEYAFHFHFFGKLPTSKDGIEQRKEDRLSQLLLQVEDFSALPGKGVQCLINGKRVLVGNRTLVTENGVNVPPEAENFLVDLELNAKTGILVSYDDDFVGLMGITDPLKREAAVVVEGLKKMGVHPVMLTGDNWRTAKAVAKEVGIEDVRAEVMPAGKADVVRSLQKDGSIVAMVGDGINDSPALAAADVGMAIGGGTDIAIEAADYVLVRNNLEDVITAIDLSRKTFSRIRWNYFFAMAYNVVAIPVAAGALFPFTRLQMPPWLAGACMAFSSVSVVCSSLLLRRYRKPRLTTVLQITVE.

A disordered region spans residues 6-25 (LSAVAGGGRPAAAGGGGDEM). The segment covering 10-22 (AGGGRPAAAGGGG) has biased composition (gly residues). 3 HMA domains span residues 51–117 (EEAH…FDAE), 133–199 (LSAQ…FEAA), and 207–273 (DKIL…NGRL). Positions 62, 65, 144, and 147 each coordinate Cu cation. The next 8 membrane-spanning stretches (helical) occupy residues 302–322 (SLFL…IPFI), 331–351 (GPFH…QFVV), 372–392 (VLVV…LLYG), 396–416 (GFHP…VLFG), 562–582 (IFVP…FLCG), 599–619 (FVFS…CALG), 938–958 (FFAM…LFPF), and 966–986 (WLAG…SLLL).

This sequence belongs to the cation transport ATPase (P-type) (TC 3.A.3) family. Type IB subfamily. In terms of tissue distribution, expressed in root vascular cylinder, vascular bundles and mesophyll cells of leaf blades, and anther walls and microspores of stamens.

Its subcellular location is the cell membrane. Metal efflux transporter that may play a role in detoxification of heavy metals, such as zinc, copper, lead and cadmium, especially in the shoots. The polypeptide is Cation-transporting ATPase HMA5 (Oryza sativa subsp. japonica (Rice)).